The chain runs to 290 residues: Ribosomal RNA small subunit methyltransferase A (290 aa).

His-37, Val-39, Gly-64, Glu-85, Asp-115, and Asn-132 together coordinate S-adenosyl-L-methionine.

This sequence belongs to the class I-like SAM-binding methyltransferase superfamily. rRNA adenine N(6)-methyltransferase family. RsmA subfamily.

It is found in the cytoplasm. It carries out the reaction adenosine(1518)/adenosine(1519) in 16S rRNA + 4 S-adenosyl-L-methionine = N(6)-dimethyladenosine(1518)/N(6)-dimethyladenosine(1519) in 16S rRNA + 4 S-adenosyl-L-homocysteine + 4 H(+). Its function is as follows. Specifically dimethylates two adjacent adenosines (A1518 and A1519) in the loop of a conserved hairpin near the 3'-end of 16S rRNA in the 30S particle. May play a critical role in biogenesis of 30S subunits. This chain is Ribosomal RNA small subunit methyltransferase A, found in Acidothermus cellulolyticus (strain ATCC 43068 / DSM 8971 / 11B).